The chain runs to 660 residues: Cullin-associated NEDD8-dissociated protein 1 homolog (660 aa).

A Glycyl lysine isopeptide (Lys-Gly) (interchain with G-Cter in NEDD8) cross-link involves residue Lys16. Residues 339-364 (TQNENDHGSDNLIDSDDGFGSDNDPE) are disordered. Over residues 351 to 363 (IDSDDGFGSDNDP) the composition is skewed to acidic residues.

Interacts with unneddylated cullin CDC53. Neddylated at Lys-16.

Its function is as follows. Assembly factor of SCF (SKP1-CUL1-F-box protein) E3 ubiquitin ligase complexes that promotes the exchange of the substrate-recognition F-box subunit in SCF complexes, thereby playing a key role in the cellular repertoire of SCF complexes. Acts as a F-box protein exchange factor. Involved in the aging process. Longevity-assurance protein. In Saccharomyces cerevisiae (strain ATCC 204508 / S288c) (Baker's yeast), this protein is Cullin-associated NEDD8-dissociated protein 1 homolog (LAG2).